The following is a 105-amino-acid chain: Large ribosomal subunit protein uL23 (105 aa).

It belongs to the universal ribosomal protein uL23 family. In terms of assembly, part of the 50S ribosomal subunit. Contacts protein L29, and trigger factor when it is bound to the ribosome.

In terms of biological role, one of the early assembly proteins it binds 23S rRNA. One of the proteins that surrounds the polypeptide exit tunnel on the outside of the ribosome. Forms the main docking site for trigger factor binding to the ribosome. The sequence is that of Large ribosomal subunit protein uL23 from Janthinobacterium sp. (strain Marseille) (Minibacterium massiliensis).